Here is an 83-residue protein sequence, read N- to C-terminus: Ardiscretin (83 aa).

The signal sequence occupies residues 1–20 (MKGMIMLISCLMLIDVVVES). The LCN-type CS-alpha/beta domain occupies 21–82 (KNGYIIEPKG…IFDYYNNKCG (62 aa)). Disulfide bonds link Cys-31–Cys-81, Cys-35–Cys-57, Cys-43–Cys-62, and Cys-47–Cys-64. Cys-81 carries the cysteine amide modification.

As to expression, expressed by the venom gland.

It is found in the secreted. Inhibits the sodium (Nav) currents in an apparent irreversible manner. Produces small depolarization and induces repetitive firing in squid axons. Is specific for arthropods (crickets, triatomides, crabs and squids), but is non-toxic to mice. Shows antibacterial activity against both Gram-positive and Gram-negative bacteria. This Tityus discrepans (Venezuelan scorpion) protein is Ardiscretin.